Consider the following 134-residue polypeptide: 15.4 kDa class V heat shock protein (134 aa).

A sHSP domain is found at 19–126 (SLNNYQENHV…LIDPSDVPES (108 aa)).

This sequence belongs to the small heat shock protein (HSP20) family. As to quaternary structure, may form oligomeric structures.

It is found in the cytoplasm. This is 15.4 kDa class V heat shock protein (HSP15.4) from Arabidopsis thaliana (Mouse-ear cress).